A 319-amino-acid chain; its full sequence is HPr kinase/phosphorylase (319 aa).

Active-site residues include His-144 and Lys-165. Residue Gly-159–Ser-166 coordinates ATP. Ser-166 contacts Mg(2+). Asp-183 acts as the Proton acceptor; for phosphorylation activity. Proton donor; for dephosphorylation activity in catalysis. The tract at residues Met-207 to Asn-216 is important for the catalytic mechanism of both phosphorylation and dephosphorylation. Residue Glu-208 coordinates Mg(2+). The active site involves Arg-249. Residues Pro-270–Arg-275 form an important for the catalytic mechanism of dephosphorylation region.

Belongs to the HPrK/P family. As to quaternary structure, homohexamer. Requires Mg(2+) as cofactor.

It catalyses the reaction [HPr protein]-L-serine + ATP = [HPr protein]-O-phospho-L-serine + ADP + H(+). The catalysed reaction is [HPr protein]-O-phospho-L-serine + phosphate + H(+) = [HPr protein]-L-serine + diphosphate. In terms of biological role, catalyzes the ATP- as well as the pyrophosphate-dependent phosphorylation of a specific serine residue in HPr, a phosphocarrier protein of the phosphoenolpyruvate-dependent sugar phosphotransferase system (PTS). HprK/P also catalyzes the pyrophosphate-producing, inorganic phosphate-dependent dephosphorylation (phosphorolysis) of seryl-phosphorylated HPr (P-Ser-HPr). This chain is HPr kinase/phosphorylase, found in Geobacter sulfurreducens (strain ATCC 51573 / DSM 12127 / PCA).